Consider the following 627-residue polypeptide: Monoterpene synthase like 1, chloroplastic (627 aa).

Residues Met-1–Ala-50 constitute a chloroplast transit peptide. 3 residues coordinate Mg(2+): Asp-378, Asp-382, and Asp-530. Residues Asp-378–Asp-382 carry the DDXXD motif motif.

The protein belongs to the terpene synthase family. Tpsd subfamily. The cofactor is Mg(2+). Requires Mn(2+) as cofactor.

It localises to the plastid. Its subcellular location is the chloroplast. The protein operates within terpene metabolism; oleoresin biosynthesis. It participates in secondary metabolite biosynthesis; terpenoid biosynthesis. Monoterpene synthase (TPS) involved in the biosynthesis of monoterpene natural products included in conifer oleoresin secretions and volatile emissions; these compounds contribute to biotic and abiotic stress defense against herbivores and pathogens. The sequence is that of Monoterpene synthase like 1, chloroplastic from Pinus contorta (Shore pine).